A 522-amino-acid polypeptide reads, in one-letter code: MKSIILFVLSLLLILEKQAAVMGQKCGSKGQLPSGSSQFPRGQKGQHYSGQKDEQHTKSKGSFSIQHTYHVDINDHDRTQKSQQYDLNAQHKMTKSKQHLGGSQELLNYKQEGRDHDKSKDHFHMIVIHHKGGQAHRGTQNPSQDQGNSPSGKGISSQYSNTEKRLWVHGLTKEQASASGAQKGRTQGGSQSSYVLQTEELVANKQQRETQNSPQNKGHYQNVVEMREEHSSKLQTSLHPAYQDRLQHGPKDIFTTQDELLVYNKNQHQTKNLNQDQEHGQKTHKISYQSSRTEERQLNRGEKSVQKDVSKGGISIQTEEKIHGKSQNQVTIHSQGQEHGHKENKMSYQSSSTEERHLNCGEKGIHKGVSKGSISIQTEEQIHGKSQNQVRIPSQAQEHGHKENKMSYQSSSTEERRLNYGGKSMQKDVSQSSTSFHTEKLVEGKSQIQTPNPNQDQWSVQNAKGKSDQSAGREQDLLSHEQKGRHQQESSEARNIVITEHEVAYDDHLTQQYNEDRNPVST.

Residues 1–23 (MKSIILFVLSLLLILEKQAAVMG) form the signal peptide. Disordered regions lie at residues 26-62 (CGSK…SKGS), 132-158 (GGQA…ISSQ), 272-358 (NLNQ…ERHL), and 379-522 (EEQI…PVST). Polar residues-rich tracts occupy residues 31–40 (QLPSGSSQFP) and 137–158 (RGTQ…ISSQ). Residues 292–310 (RTEERQLNRGEKSVQKDVS) are compositionally biased toward basic and acidic residues. Polar residues predominate over residues 325-335 (KSQNQVTIHSQ). Residues 336–345 (GQEHGHKENK) show a composition bias toward basic and acidic residues. Polar residues-rich tracts occupy residues 379-397 (EEQI…SQAQ), 427-436 (KDVSQSSTSF), and 446-464 (SQIQ…QNAK). 2 stretches are compositionally biased toward basic and acidic residues: residues 465–492 (GKSD…ESSE) and 499–522 (TEHE…PVST).

It belongs to the semenogelin family. In terms of assembly, interacts with SERPINA5.

The protein resides in the secreted. Its function is as follows. Participates in the formation of a gel matrix (sperm coagulum) entrapping the accessory gland secretions and ejaculated spermatozoa. The sequence is that of Semenogelin-2 (SEMG2) from Hylobates klossii (Kloss's gibbon).